Reading from the N-terminus, the 201-residue chain is Small ribosomal subunit protein uS4c (201 aa).

A disordered region spans residues 20–44 (GLTSKRPRAGSDLRNQSRSGKKSQY). An S4 RNA-binding domain is found at 89–152 (MRLDNILFRL…NSRTLVQNLL (64 aa)).

The protein belongs to the universal ribosomal protein uS4 family. In terms of assembly, part of the 30S ribosomal subunit. Contacts protein S5. The interaction surface between S4 and S5 is involved in control of translational fidelity.

Its subcellular location is the plastid. The protein localises to the chloroplast. In terms of biological role, one of the primary rRNA binding proteins, it binds directly to 16S rRNA where it nucleates assembly of the body of the 30S subunit. With S5 and S12 plays an important role in translational accuracy. In Arabis hirsuta (Hairy rock-cress), this protein is Small ribosomal subunit protein uS4c (rps4).